The chain runs to 225 residues: 7-cyano-7-deazaguanine synthase (225 aa).

9 to 19 (YSGGLDSTTCL) contributes to the ATP binding site. Positions 188, 198, 201, and 204 each coordinate Zn(2+).

This sequence belongs to the QueC family. Zn(2+) is required as a cofactor.

It carries out the reaction 7-carboxy-7-deazaguanine + NH4(+) + ATP = 7-cyano-7-deazaguanine + ADP + phosphate + H2O + H(+). The protein operates within purine metabolism; 7-cyano-7-deazaguanine biosynthesis. Catalyzes the ATP-dependent conversion of 7-carboxy-7-deazaguanine (CDG) to 7-cyano-7-deazaguanine (preQ(0)). This Geobacter sp. (strain M21) protein is 7-cyano-7-deazaguanine synthase.